The sequence spans 1863 residues: C-myc promoter-binding protein (1863 aa).

One can recognise an MABP domain in the interval 42–200; it reads KEPITDVSVI…AVYLCYKKSV (159 aa). Residues 192–364 enclose the uDENN domain; it reads VYLCYKKSVA…KVPFPSPQRP (173 aa). The cDENN domain maps to 385–521; the sequence is PLPLSGGKFS…PCKNLMNTLN (137 aa). The dDENN domain maps to 523-641; the sequence is LHQQLAKLQQ…CSFVSDKDAS (119 aa). S731 bears the Phosphoserine mark. PPR repeat units follow at residues 772-808 and 809-843; these read WFIC…MDPP and DEVC…GIDP. The disordered stretch occupies residues 905-952; it reads DLGYNSLSKDEVRRGDTSTEDIQEEKDKKGSDCSSLSESESTKGSADC. Over residues 912-921 the composition is skewed to basic and acidic residues; the sequence is SKDEVRRGDT. A Bipartite nuclear localization signal motif is present at residues 917–933; it reads RRGDTSTEDIQEEKDKK. Residues 936-949 show a composition bias toward low complexity; that stretch reads DCSSLSESESTKGS. S1015, S1035, S1099, S1151, and S1152 each carry phosphoserine. Residues 1075–1111 are disordered; sequence TRPNTLDIGKPPLRSKRDSLEKESSDDDTPFDGSNYL. The disordered stretch occupies residues 1177–1202; the sequence is TEQQQKEEEEEDEDDSKSISTPSARR. Phosphoserine occurs at positions 1225, 1240, and 1251. Disordered stretches follow at residues 1237–1306 and 1348–1375; these read NKKS…SPSF and SKDQ…TDED. A compositionally biased stretch (basic and acidic residues) spans 1269 to 1279; it reads TKSEEKPRDRL. S1281 bears the Phosphoserine mark. Composition is skewed to polar residues over residues 1297–1306 and 1348–1371; these read DTLTHSSPSF and SKDQ…STSL. S1508, S1587, S1589, and S1591 each carry phosphoserine.

In terms of tissue distribution, expressed ubiquitously. Highest expression in bone marrow, medium in peripheral blood lymphocytes and lowest in spleen. In brain, breast, and prostate, higher expression was seen in normal cells than in tumor cells. Expression is regulated in a growth- and cell cycle-dependent manner.

The protein resides in the nucleus. Probable guanine nucleotide exchange factor (GEF) which may activate RAB10. Promotes the exchange of GDP to GTP, converting inactive GDP-bound Rab proteins into their active GTP-bound form. According to PubMed:8056341, it may bind to ISRE-like element (interferon-stimulated response element) of MYC P2 promoter. The chain is C-myc promoter-binding protein (DENND4A) from Homo sapiens (Human).